The sequence spans 417 residues: MLEQMGKQAKDAAFILAQLTTAEKNCALSIIAEQLEQQAPLILAENAKDIELAKQNGLSDALIDRLLLTQERLQGIANDVRHVISLADPVGKIIDGGTLDSGLKIERVRTPLGVIGTIYEARPNVTIDVASLCLKTGNAVILRGGKETQFSNKILIEVVQNALEQAGLPKFAVQAITDPNRELVMQLLKLDRYVDMIIPRGGAGLHELCKQHSTIPVIVGGVGVCHIFVEKSADQNKAVFVIDNAKTQRPSTCNTLETLLVQHSIAEEFLPKLVSHLSAKNVKYHAKSTALNILKQAGANVCEVTEKELRKEWGSLDLNVVVVEDIHAAIEHIRQYGTQHSESILTSSQNLARQFINQVDAAAVYVNASTRFTDGGQFGLGAEVAVSTQKLHARGPMGLEALTSYKWVCEGEYTVRK.

This sequence belongs to the gamma-glutamyl phosphate reductase family.

The protein resides in the cytoplasm. The enzyme catalyses L-glutamate 5-semialdehyde + phosphate + NADP(+) = L-glutamyl 5-phosphate + NADPH + H(+). It functions in the pathway amino-acid biosynthesis; L-proline biosynthesis; L-glutamate 5-semialdehyde from L-glutamate: step 2/2. In terms of biological role, catalyzes the NADPH-dependent reduction of L-glutamate 5-phosphate into L-glutamate 5-semialdehyde and phosphate. The product spontaneously undergoes cyclization to form 1-pyrroline-5-carboxylate. The polypeptide is Gamma-glutamyl phosphate reductase (Haemophilus influenzae (strain PittGG)).